The following is a 506-amino-acid chain: Nondiscriminating glutamyl-tRNA synthetase EARS2, mitochondrial (506 aa).

Residues 1–41 (MAALLRRLLQRGRPLAASGRRVGRREARLGTGPGVAVRVRF) constitute a mitochondrion transit peptide. Position 40–42 (40–42 (RFA)) interacts with L-glutamate. The short motif at 45–53 (PTGFLHLGG) is the 'HIGH' region element. H50 is an ATP binding site. L-glutamate is bound by residues E76, 228–232 (YHLAC), and R246. ATP is bound at residue E249. K256 carries the post-translational modification N6-succinyllysine. An ATP-binding site is contributed by 284 to 288 (KLSKR). The 'KMSKS' region motif lies at 284 to 288 (KLSKR). K486 carries the N6-acetyllysine modification.

Belongs to the class-I aminoacyl-tRNA synthetase family. Glutamate--tRNA ligase type 1 subfamily.

The protein localises to the mitochondrion matrix. It catalyses the reaction tRNA(Glx) + L-glutamate + ATP = L-glutamyl-tRNA(Glx) + AMP + diphosphate. The enzyme catalyses tRNA(Glu) + L-glutamate + ATP = L-glutamyl-tRNA(Glu) + AMP + diphosphate. It carries out the reaction tRNA(Gln) + L-glutamate + ATP = L-glutamyl-tRNA(Gln) + AMP + diphosphate. Non-discriminating glutamyl-tRNA synthetase that catalyzes aminoacylation of both mitochondrial tRNA(Glu) and tRNA(Gln) and participates in RNA aminoacylation for mitochondrial protein translation. Attachs glutamate to tRNA(Glu) or tRNA(Gln) in a two-step reaction: glutamate is first activated by ATP to form Glu-AMP and then transferred to the acceptor end of tRNA(Glu) or tRNA(Gln). In vitro, cytoplasmic tRNA(Gln) is slightly glutamylated, but with low activity. The sequence is that of Nondiscriminating glutamyl-tRNA synthetase EARS2, mitochondrial from Macaca fascicularis (Crab-eating macaque).